We begin with the raw amino-acid sequence, 222 residues long: MHINIAWQDVDTVLLDMDGTLLDLAFDNYFWQKLVPETWGAKNGVTPQEAMEYMRQQYHDVQHTLNWYCLDYWSEQLGLDICAMTTEMGPRAVLREDTIPFLEALKASGKQRILLTNAHPHNLAVKLEHTGLDAHLDLLLSTHTFGYPKEDQRLWHAVAEATGLKAERTLFIDDSEAILDAAAQFGIRYCLGVTNPDSGIAEKQYQRHPSLNDYRRLIPSLM.

The active-site Nucleophile is the D9. D9 and D11 together coordinate Mg(2+). Substrate contacts are provided by residues 9-11 (DVD) and K149. Residue D174 participates in Mg(2+) binding.

It belongs to the HAD-like hydrolase superfamily. Mg(2+) is required as a cofactor. Mn(2+) serves as cofactor. The cofactor is Co(2+). It depends on Zn(2+) as a cofactor.

The catalysed reaction is a ribonucleoside 5'-phosphate + H2O = a ribonucleoside + phosphate. Its function is as follows. Catalyzes the dephosphorylation of different purine nucleotides (GMP and IMP). Also hydrolyzes flavin mononucleotide (FMN). The protein is GMP/IMP nucleotidase YrfG (yrfG) of Escherichia coli (strain K12).